A 565-amino-acid chain; its full sequence is CTP synthase (565 aa).

An amidoligase domain region spans residues 1–272 (MARPKNVKHI…DKRVLKKLGI (272 aa)). Serine 18 provides a ligand contact to CTP. Residue serine 18 coordinates UTP. An ATP-binding site is contributed by 19-24 (SLGKGI). Tyrosine 59 serves as a coordination point for L-glutamine. Aspartate 76 contributes to the ATP binding site. Mg(2+)-binding residues include aspartate 76 and glutamate 146. CTP contacts are provided by residues 153–155 (DIE), 193–198 (KTKPTQ), and lysine 229. UTP contacts are provided by residues 193–198 (KTKPTQ) and lysine 229. A Glutamine amidotransferase type-1 domain is found at 299 to 543 (TIAVCGKYTE…VAAAKAFAFG (245 aa)). Residue glycine 363 participates in L-glutamine binding. Cysteine 390 acts as the Nucleophile; for glutamine hydrolysis in catalysis. L-glutamine-binding positions include 391-394 (LGMQ), glutamate 414, and arginine 471. Active-site residues include histidine 516 and glutamate 518.

The protein belongs to the CTP synthase family. In terms of assembly, homotetramer.

It catalyses the reaction UTP + L-glutamine + ATP + H2O = CTP + L-glutamate + ADP + phosphate + 2 H(+). The catalysed reaction is L-glutamine + H2O = L-glutamate + NH4(+). It carries out the reaction UTP + NH4(+) + ATP = CTP + ADP + phosphate + 2 H(+). It participates in pyrimidine metabolism; CTP biosynthesis via de novo pathway; CTP from UDP: step 2/2. Its activity is regulated as follows. Allosterically activated by GTP, when glutamine is the substrate; GTP has no effect on the reaction when ammonia is the substrate. The allosteric effector GTP functions by stabilizing the protein conformation that binds the tetrahedral intermediate(s) formed during glutamine hydrolysis. Inhibited by the product CTP, via allosteric rather than competitive inhibition. In terms of biological role, catalyzes the ATP-dependent amination of UTP to CTP with either L-glutamine or ammonia as the source of nitrogen. Regulates intracellular CTP levels through interactions with the four ribonucleotide triphosphates. In Chlorobium phaeobacteroides (strain BS1), this protein is CTP synthase.